The chain runs to 36 residues: LFCRKGTCHFGGCPAHLVKVGSCFGFRACCKWPWDV.

3 cysteine pairs are disulfide-bonded: Cys3–Cys29, Cys8–Cys23, and Cys13–Cys30.

The protein localises to the secreted. Its function is as follows. Has antibacterial activity against the Gram-positive bacteria S.aureus 1056 MRSA (MIC=1.25 ug/ml) and S.aureus NCTC 4163 (MIC=6.7 ug/ml), and the Gram-negative bacteria E.coli O157:H7 (MIC=0.96 ug/ml) and E.coli 0111 (MIC=6.7 ug/ml). Does not have antifungal activity against the yeast C.albicans 3153A. The chain is Ostricacin-1 from Struthio camelus (Common ostrich).